The following is a 348-amino-acid chain: Holliday junction branch migration complex subunit RuvB (348 aa).

The tract at residues 3–183 (DDGLVSAAAS…FGFTAHLDFY (181 aa)) is large ATPase domain (RuvB-L). ATP-binding positions include Leu22, Arg23, Gly64, Lys67, Thr68, Ser69, 130-132 (EDF), Arg173, Tyr183, and Arg220. Position 68 (Thr68) interacts with Mg(2+). Residues 184 to 254 (DADELARVLT…IAQAALRIYD (71 aa)) are small ATPAse domain (RuvB-S). The interval 257 to 348 (GLGLDRLDRA…TQVSLFTEGE (92 aa)) is head domain (RuvB-H). Positions 312 and 317 each coordinate DNA.

The protein belongs to the RuvB family. As to quaternary structure, homohexamer. Forms an RuvA(8)-RuvB(12)-Holliday junction (HJ) complex. HJ DNA is sandwiched between 2 RuvA tetramers; dsDNA enters through RuvA and exits via RuvB. An RuvB hexamer assembles on each DNA strand where it exits the tetramer. Each RuvB hexamer is contacted by two RuvA subunits (via domain III) on 2 adjacent RuvB subunits; this complex drives branch migration. In the full resolvosome a probable DNA-RuvA(4)-RuvB(12)-RuvC(2) complex forms which resolves the HJ.

It localises to the cytoplasm. It catalyses the reaction ATP + H2O = ADP + phosphate + H(+). The RuvA-RuvB-RuvC complex processes Holliday junction (HJ) DNA during genetic recombination and DNA repair, while the RuvA-RuvB complex plays an important role in the rescue of blocked DNA replication forks via replication fork reversal (RFR). RuvA specifically binds to HJ cruciform DNA, conferring on it an open structure. The RuvB hexamer acts as an ATP-dependent pump, pulling dsDNA into and through the RuvAB complex. RuvB forms 2 homohexamers on either side of HJ DNA bound by 1 or 2 RuvA tetramers; 4 subunits per hexamer contact DNA at a time. Coordinated motions by a converter formed by DNA-disengaged RuvB subunits stimulates ATP hydrolysis and nucleotide exchange. Immobilization of the converter enables RuvB to convert the ATP-contained energy into a lever motion, pulling 2 nucleotides of DNA out of the RuvA tetramer per ATP hydrolyzed, thus driving DNA branch migration. The RuvB motors rotate together with the DNA substrate, which together with the progressing nucleotide cycle form the mechanistic basis for DNA recombination by continuous HJ branch migration. Branch migration allows RuvC to scan DNA until it finds its consensus sequence, where it cleaves and resolves cruciform DNA. The chain is Holliday junction branch migration complex subunit RuvB from Frankia casuarinae (strain DSM 45818 / CECT 9043 / HFP020203 / CcI3).